The chain runs to 275 residues: Adenylate kinase (275 aa).

54–59 (GAGKGT) is a binding site for ATP. An NMP region spans residues 74–103 (ATGDMLRSQVAKKTPLGREAKKIMDQGGLV). AMP-binding positions include Thr-75, Arg-80, 101 to 103 (GLV), 130 to 133 (GFPR), and Gln-137. The interval 171 to 208 (GRLVHPASGRSYHRVFNPPKAEMKDDITGEPLVSRSDD) is LID. Residues Arg-172 and 181-182 (SY) each bind ATP. Arg-205 and Arg-216 together coordinate AMP. Position 244 (Gln-244) interacts with ATP.

Belongs to the adenylate kinase family. AK2 subfamily. Monomer.

The protein resides in the cytoplasm. The protein localises to the cytosol. It is found in the mitochondrion intermembrane space. The enzyme catalyses AMP + ATP = 2 ADP. Functionally, catalyzes the reversible transfer of the terminal phosphate group between ATP and AMP. Plays an important role in cellular energy homeostasis and in adenine nucleotide metabolism. Adenylate kinase activity is critical for regulation of the phosphate utilization and the AMP de novo biosynthesis pathways. The protein is Adenylate kinase (adk1) of Sclerotinia sclerotiorum (strain ATCC 18683 / 1980 / Ss-1) (White mold).